Consider the following 240-residue polypeptide: ATP-dependent dethiobiotin synthetase BioD (240 aa).

15–20 (EIGKTF) is an ATP binding site. Position 19 (threonine 19) interacts with Mg(2+). Residue lysine 40 is part of the active site. Residues aspartate 57, 118–121 (EGVG), and 178–179 (NR) contribute to the ATP site. Positions 57 and 118 each coordinate Mg(2+).

It belongs to the dethiobiotin synthetase family. As to quaternary structure, homodimer. It depends on Mg(2+) as a cofactor.

It is found in the cytoplasm. The enzyme catalyses (7R,8S)-7,8-diammoniononanoate + CO2 + ATP = (4R,5S)-dethiobiotin + ADP + phosphate + 3 H(+). Its pathway is cofactor biosynthesis; biotin biosynthesis; biotin from 7,8-diaminononanoate: step 1/2. Functionally, catalyzes a mechanistically unusual reaction, the ATP-dependent insertion of CO2 between the N7 and N8 nitrogen atoms of 7,8-diaminopelargonic acid (DAPA, also called 7,8-diammoniononanoate) to form a ureido ring. The chain is ATP-dependent dethiobiotin synthetase BioD from Burkholderia pseudomallei (strain 1106a).